The chain runs to 765 residues: FHF complex subunit HOOK interacting protein 2A (765 aa).

2 disordered regions span residues 193–236 (TLKG…DHLS) and 532–561 (TDIS…KNDG). Composition is skewed to polar residues over residues 196 to 208 (GQDS…GQSR) and 535 to 550 (SPEN…SSSP).

The protein belongs to the FHIP family. In terms of tissue distribution, expressed in all tissues tested, highly expressed brain. Only detected at high levels in testis.

Functionally, required for proper functioning of the nervous system. In Homo sapiens (Human), this protein is FHF complex subunit HOOK interacting protein 2A.